The sequence spans 123 residues: Large ribosomal subunit protein uL18 (123 aa).

The protein belongs to the universal ribosomal protein uL18 family. In terms of assembly, part of the 50S ribosomal subunit; part of the 5S rRNA/L5/L18/L25 subcomplex. Contacts the 5S and 23S rRNAs.

In terms of biological role, this is one of the proteins that bind and probably mediate the attachment of the 5S RNA into the large ribosomal subunit, where it forms part of the central protuberance. In Chlamydia pneumoniae (Chlamydophila pneumoniae), this protein is Large ribosomal subunit protein uL18.